The chain runs to 135 residues: MRVLLQLGLLALGAVCVCAIPKQSATLRALVRETLTLLSTHRTLLKGNETLRISVPAHKNHQLCIEEIFQGIDTLKNQTTQGEALATLFQNLSLIKKHIDLQKQKCGEERRRVKQFLDYLQEFLAVINTEWTIEG.

Positions 1 to 19 are cleaved as a signal peptide; it reads MRVLLQLGLLALGAVCVCA. N-linked (GlcNAc...) asparagine glycosylation is found at Asn48, Asn77, and Asn91.

The protein belongs to the IL-5 family. Homodimer; disulfide-linked. Interacts with IL5RA. Interacts with CSF2RB.

Its subcellular location is the secreted. Homodimeric cytokine expressed predominantly by T-lymphocytes and NK cells that plays an important role in the survival, differentiation, and chemotaxis of eosinophils. Also acts on activated and resting B-cells to induce immunoglobulin production, growth, and differentiation. Mechanistically, exerts its biological effects through a receptor composed of IL5RA subunit and the cytokine receptor common subunit beta/CSF2RB. Binding to the receptor leads to activation of various kinases including LYN, SYK and JAK2 and thereby propagates signals through the RAS-MAPK and JAK-STAT5 pathways respectively. The chain is Interleukin-5 (IL5) from Cavia porcellus (Guinea pig).